The chain runs to 264 residues: Small ribosomal subunit protein eS1 (264 aa).

The protein belongs to the eukaryotic ribosomal protein eS1 family. As to quaternary structure, component of the small ribosomal subunit. Mature ribosomes consist of a small (40S) and a large (60S) subunit. The 40S subunit contains about 33 different proteins and 1 molecule of RNA (18S). The 60S subunit contains about 49 different proteins and 3 molecules of RNA (25S, 5.8S and 5S).

It localises to the cytoplasm. This is Small ribosomal subunit protein eS1 from Babesia bovis.